We begin with the raw amino-acid sequence, 119 residues long: Large ribosomal subunit protein uL18 (119 aa).

Belongs to the universal ribosomal protein uL18 family. Part of the 50S ribosomal subunit; part of the 5S rRNA/L5/L18/L25 subcomplex. Contacts the 5S and 23S rRNAs.

Functionally, this is one of the proteins that bind and probably mediate the attachment of the 5S RNA into the large ribosomal subunit, where it forms part of the central protuberance. The sequence is that of Large ribosomal subunit protein uL18 from Xanthomonas campestris pv. campestris (strain 8004).